A 61-amino-acid chain; its full sequence is MPSIKQCSFCGKEIPPATGLMYIRNDGSILWFCSNKCKKSMLKLHRDPKKLKWTKSYIGGK.

The Zn(2+) site is built by Cys7, Cys10, Cys33, and Cys37. The C4-type zinc finger occupies Cys7–Cys37.

It belongs to the eukaryotic ribosomal protein eL24 family. As to quaternary structure, part of the 50S ribosomal subunit. Forms a cluster with proteins L3 and L14. Zn(2+) is required as a cofactor.

Functionally, binds to the 23S rRNA. The chain is Large ribosomal subunit protein eL24 from Sulfurisphaera tokodaii (strain DSM 16993 / JCM 10545 / NBRC 100140 / 7) (Sulfolobus tokodaii).